Consider the following 270-residue polypeptide: Orotidine 5'-phosphate decarboxylase (270 aa).

Substrate contacts are provided by residues Asp39, 61–63 (KTH), 93–102 (DRKFADIGNT), Tyr221, and Arg239. Catalysis depends on Lys95, which acts as the Proton donor.

This sequence belongs to the OMP decarboxylase family.

The enzyme catalyses orotidine 5'-phosphate + H(+) = UMP + CO2. Its pathway is pyrimidine metabolism; UMP biosynthesis via de novo pathway; UMP from orotate: step 2/2. This chain is Orotidine 5'-phosphate decarboxylase (URA3), found in Candida albicans (strain SC5314 / ATCC MYA-2876) (Yeast).